Reading from the N-terminus, the 218-residue chain is Small ribosomal subunit protein uS3c (218 aa).

The KH type-2 domain maps to 43–118 (IKNYVQKNPR…RLNIAIARIS (76 aa)).

This sequence belongs to the universal ribosomal protein uS3 family. In terms of assembly, part of the 30S ribosomal subunit.

The protein localises to the plastid. The protein resides in the chloroplast. The polypeptide is Small ribosomal subunit protein uS3c (rps3) (Acorus calamus (Sweet flag)).